A 187-amino-acid chain; its full sequence is Large ribosomal subunit protein uL5 (187 aa).

Belongs to the universal ribosomal protein uL5 family. In terms of assembly, part of the 50S ribosomal subunit; part of the 5S rRNA/L5/L18/L25 subcomplex. Contacts the 5S rRNA and the P site tRNA. Forms a bridge to the 30S subunit in the 70S ribosome.

Its function is as follows. This is one of the proteins that bind and probably mediate the attachment of the 5S RNA into the large ribosomal subunit, where it forms part of the central protuberance. In the 70S ribosome it contacts protein S13 of the 30S subunit (bridge B1b), connecting the 2 subunits; this bridge is implicated in subunit movement. Contacts the P site tRNA; the 5S rRNA and some of its associated proteins might help stabilize positioning of ribosome-bound tRNAs. The chain is Large ribosomal subunit protein uL5 from Ruegeria sp. (strain TM1040) (Silicibacter sp.).